An 872-amino-acid polypeptide reads, in one-letter code: HTH-type transcriptional regulator AlkS (872 aa).

The HTH luxR-type domain maps to 805 to 870 (LTNTQSTITI…RAVSEARLRG (66 aa)). The H-T-H motif DNA-binding region spans 829 to 848 (NKEIAERLLITEDTVKWHLK).

Its pathway is hydrocarbon metabolism; alkane degradation. In terms of biological role, this protein activates the expression of AlkB1 in the presence of alkanes. This Alcanivorax borkumensis (strain ATCC 700651 / DSM 11573 / NCIMB 13689 / SK2) protein is HTH-type transcriptional regulator AlkS (alkS).